A 52-amino-acid chain; its full sequence is Rubredoxin-2 (52 aa).

In terms of domain architecture, Rubredoxin-like spans 1-52 (MEQWKCNICGYIYNPETGDPEGDIPAGTSFESLPDSWMCPVCGAGKEEFTKI). Positions 6, 9, 39, and 42 each coordinate Fe cation.

It belongs to the rubredoxin family. In terms of assembly, monomer. It depends on Fe(3+) as a cofactor.

Its function is as follows. Serves as an electron acceptor for pyruvate ferredoxin oxidoreductase (PFOR). This is Rubredoxin-2 (rub2) from Chlorobaculum tepidum (strain ATCC 49652 / DSM 12025 / NBRC 103806 / TLS) (Chlorobium tepidum).